Here is a 1022-residue protein sequence, read N- to C-terminus: Protein translocase subunit SECA1, chloroplastic (1022 aa).

The transit peptide at 1 to 72 (MVSPLCDSQL…SRKRSTSVNA (72 aa)) directs the protein to the chloroplast. An N-acetylserine modification is found at serine 73. ATP is bound at residue 176-183 (MRTGEGKT). Residues 985 to 1022 (KDEEKKSQNGKPSKQVDNASEKPKQVGVTDEPSSIASA) are disordered. Positions 993 to 1002 (NGKPSKQVDN) are enriched in polar residues.

It belongs to the SecA family. In terms of assembly, part of the Sec protein translocation apparatus. Interacts probably with SCY1. In terms of tissue distribution, expressed in green tissues, including cotyledons, rosette and cauline leaves, and sepals. Also detected at the base and the tip of the trichome.

Its subcellular location is the plastid. It is found in the chloroplast stroma. The protein localises to the chloroplast thylakoid membrane. It carries out the reaction ATP + H2O + chloroplast-proteinSide 1 = ADP + phosphate + chloroplast-proteinSide 2.. Functionally, has a central role in coupling the hydrolysis of ATP to the transfer of proteins across the thylakoid membrane. Involved in photosynthetic acclimation and required for chloroplast biogenesis. This is Protein translocase subunit SECA1, chloroplastic from Arabidopsis thaliana (Mouse-ear cress).